A 697-amino-acid chain; its full sequence is Potassium-transporting ATPase ATP-binding subunit (697 aa).

Transmembrane regions (helical) follow at residues 55–75 (PIMF…FLPS), 79–99 (SIPG…VLFA), 245–265 (LTLI…YLGF), and 271–291 (VLVA…LSAI). Residue Asp-324 is the 4-aspartylphosphate intermediate of the active site. Residues Asp-361, Glu-365, 393–400 (FKAETRMS), and Lys-412 each bind ATP. Asp-535 and Asp-539 together coordinate Mg(2+). Transmembrane regions (helical) follow at residues 605–625 (FAII…LNIM), 633–653 (AILS…PLAM), and 677–697 (GGVI…GLFI).

Belongs to the cation transport ATPase (P-type) (TC 3.A.3) family. Type IA subfamily. As to quaternary structure, the system is composed of three essential subunits: KdpA, KdpB and KdpC.

Its subcellular location is the cell membrane. The catalysed reaction is K(+)(out) + ATP + H2O = K(+)(in) + ADP + phosphate + H(+). Part of the high-affinity ATP-driven potassium transport (or Kdp) system, which catalyzes the hydrolysis of ATP coupled with the electrogenic transport of potassium into the cytoplasm. This subunit is responsible for energy coupling to the transport system and for the release of the potassium ions to the cytoplasm. This chain is Potassium-transporting ATPase ATP-binding subunit, found in Bacillus cereus (strain ZK / E33L).